Reading from the N-terminus, the 540-residue chain is Glucose-6-phosphate isomerase (540 aa).

Catalysis depends on glutamate 350, which acts as the Proton donor. Residues histidine 381 and lysine 503 contribute to the active site.

The protein belongs to the GPI family.

It localises to the cytoplasm. The enzyme catalyses alpha-D-glucose 6-phosphate = beta-D-fructose 6-phosphate. It functions in the pathway carbohydrate biosynthesis; gluconeogenesis. It participates in carbohydrate degradation; glycolysis; D-glyceraldehyde 3-phosphate and glycerone phosphate from D-glucose: step 2/4. Functionally, catalyzes the reversible isomerization of glucose-6-phosphate to fructose-6-phosphate. The polypeptide is Glucose-6-phosphate isomerase (Burkholderia pseudomallei (strain 668)).